We begin with the raw amino-acid sequence, 801 residues long: Protocadherin beta-8 (801 aa).

A signal peptide spans 1 to 29 (MEASGKLICRQRQVLFSFLLLGLSLAGAA). Topologically, residues 30-691 (EPRSYSVVEE…GQADSLTVYL (662 aa)) are extracellular. 5 consecutive Cadherin domains span residues 36–134 (VVEE…SPVF), 139–243 (MLVK…APEF), 248–348 (YRVQ…APEV), 353–452 (FTSP…APAF), and 457–562 (YTLF…SPFV). C97 and C103 are joined by a disulfide. Residues N419 and N437 are each glycosylated (N-linked (GlcNAc...) asparagine). The N-linked (GlcNAc...) asparagine glycan is linked to N568. One can recognise a Cadherin 6 domain in the interval 569–672 (GSAPCTELVP…LVDGFSQPYL (104 aa)). A helical membrane pass occupies residues 692–710 (VVALASVSSLFLFSVLLFV). The Cytoplasmic segment spans residues 711-801 (AVLLCRRSRA…NGFGFSLQLK (91 aa)).

As to quaternary structure, forms homodimers in trans (molecules expressed by two different cells). Forms promiscuous heterodimers in cis (at the plasma membrane of the same cell) with other protocadherins.

The protein resides in the cell membrane. Functionally, calcium-dependent cell-adhesion protein involved in cells self-recognition and non-self discrimination. Thereby, it is involved in the establishment and maintenance of specific neuronal connections in the brain. The protein is Protocadherin beta-8 of Homo sapiens (Human).